The following is a 454-amino-acid chain: Protein translocase subunit SecY (454 aa).

10 consecutive transmembrane segments (helical) span residues 43–63 (LTIA…LPYI), 97–117 (FTLG…AFVI), 144–164 (TLLL…AFIF), 168–188 (ILKL…ILWI), 201–221 (SSFL…GMSF), 226–246 (IFSF…WAAI), 289–309 (PVVF…YILL), 334–354 (IVEA…IIDP), 390–410 (LIGA…GFVF), and 414–434 (IFKG…TEIL).

It belongs to the SecY/SEC61-alpha family. In terms of assembly, component of the plastid Sec protein translocase complex, which is composed of at least SecY and SecE.

It localises to the plastid. It is found in the chloroplast thylakoid membrane. Functionally, the central subunit of the protein translocation channel SecYE. Consists of two halves formed by TMs 1-5 and 6-10. These two domains form a lateral gate at the front which open onto the bilayer between TMs 2 and 7, and are clamped together by SecE at the back. The channel is closed by both a pore ring composed of hydrophobic SecY resides and a short helix (helix 2A) on the extracellular side of the membrane which forms a plug. The polypeptide is Protein translocase subunit SecY (Heterosigma akashiwo (strain NIES-293 / 8280G21-1)).